A 218-amino-acid chain; its full sequence is Small ribosomal subunit protein uS3 (218 aa).

Residues 38–106 enclose the KH type-2 domain; the sequence is IREFINQRLS…RVHINILEIK (69 aa).

The protein belongs to the universal ribosomal protein uS3 family. In terms of assembly, part of the 30S ribosomal subunit. Forms a tight complex with proteins S10 and S14.

Binds the lower part of the 30S subunit head. Binds mRNA in the 70S ribosome, positioning it for translation. The polypeptide is Small ribosomal subunit protein uS3 (Bacillus licheniformis (strain ATCC 14580 / DSM 13 / JCM 2505 / CCUG 7422 / NBRC 12200 / NCIMB 9375 / NCTC 10341 / NRRL NRS-1264 / Gibson 46)).